We begin with the raw amino-acid sequence, 285 residues long: Stress response regulator protein 1 (285 aa).

Composition is skewed to low complexity over residues 43-58 and 128-138; these read DTSSQNDSISTQSSNN and SIISSKSSNKS. Disordered stretches follow at residues 43–66 and 114–142; these read DTSSQNDSISTQSSNNDDTHSDQQ and PLTPFDDQTTSPQDSIISSKSSNKSTTVV. One can recognise a Response regulatory domain in the interval 158-276; that stretch reads SFLIVDDNII…LDFMANSIDD (119 aa). Residue Asp-209 is modified to 4-aspartylphosphate.

Its function is as follows. Required for stress adaptation, morphogenesis and virulence. The chain is Stress response regulator protein 1 (SRR1) from Candida dubliniensis (strain CD36 / ATCC MYA-646 / CBS 7987 / NCPF 3949 / NRRL Y-17841) (Yeast).